The following is a 108-amino-acid chain: ATP synthase peripheral stalk subunit F6, mitochondrial (108 aa).

A mitochondrion-targeting transit peptide spans 1-32; the sequence is MTVQRIFRLSSVLRSAVSVHLRRNIGVTAVAF. Residues lysine 41, lysine 46, and lysine 79 each carry the N6-acetyllysine modification. An N6-acetyllysine; alternate mark is found at lysine 84 and lysine 99. N6-succinyllysine; alternate is present on residues lysine 84 and lysine 99. An N6-acetyllysine modification is found at lysine 105. Serine 108 carries the phosphoserine modification.

Belongs to the eukaryotic ATPase subunit F6 family. In terms of assembly, component of the ATP synthase complex composed at least of ATP5F1A/subunit alpha, ATP5F1B/subunit beta, ATP5MC1/subunit c (homooctomer), MT-ATP6/subunit a, MT-ATP8/subunit 8, ATP5ME/subunit e, ATP5MF/subunit f, ATP5MG/subunit g, ATP5MK/subunit k, ATP5MJ/subunit j, ATP5F1C/subunit gamma, ATP5F1D/subunit delta, ATP5F1E/subunit epsilon, ATP5PF/subunit F6, ATP5PB/subunit b, ATP5PD/subunit d, ATP5PO/subunit OSCP. ATP synthase complex consists of a soluble F(1) head domain (subunits alpha(3) and beta(3)) - the catalytic core - and a membrane F(0) domain - the membrane proton channel (subunits c, a, 8, e, f, g, k and j). These two domains are linked by a central stalk (subunits gamma, delta, and epsilon) rotating inside the F1 region and a stationary peripheral stalk (subunits F6, b, d, and OSCP).

The protein localises to the mitochondrion. Its subcellular location is the mitochondrion inner membrane. Its function is as follows. Subunit F6, of the mitochondrial membrane ATP synthase complex (F(1)F(0) ATP synthase or Complex V) that produces ATP from ADP in the presence of a proton gradient across the membrane which is generated by electron transport complexes of the respiratory chain. ATP synthase complex consist of a soluble F(1) head domain - the catalytic core - and a membrane F(1) domain - the membrane proton channel. These two domains are linked by a central stalk rotating inside the F(1) region and a stationary peripheral stalk. During catalysis, ATP synthesis in the catalytic domain of F(1) is coupled via a rotary mechanism of the central stalk subunits to proton translocation. In vivo, can only synthesize ATP although its ATP hydrolase activity can be activated artificially in vitro. Part of the complex F(0) domain. Part of the complex F(0) domain and the peripheric stalk, which acts as a stator to hold the catalytic alpha(3)beta(3) subcomplex and subunit a/ATP6 static relative to the rotary elements. In Rattus norvegicus (Rat), this protein is ATP synthase peripheral stalk subunit F6, mitochondrial.